The sequence spans 138 residues: Hexon-interlacing protein (138 aa).

The stretch at 100–127 (LLVLLAQLEALTQRLGELSKQVAQLREQ) forms a coiled coil.

Belongs to the adenoviridae hexon-interlacing protein family. In terms of assembly, homotrimer. Interacts with hexon protein; this interaction tethers the hexons together. Self-interacts with adjacent proteins. Interacts with kinesin light chain KLC1; this interaction leads to capsid disruption at the nuclear pore complex during virus entry into host cell.

The protein localises to the virion. It is found in the host nucleus. Structural component of the virion that acts as a cement protein on the capsid exterior and forms triskelion structures consisting of three molecules that stabilize three hexon trimers at the center of each icosahedral facet and fixes the peripentonal hexons. Dispensable for assembly. During virus entry, recruits the anterograde motor kinesin-1 to the capsid docked at the nuclear pore complex thereby subjecting the docked capsid to a pulling force. The resulting tension leads to capsid disruption, dispersion of capsid fragments toward cell periphery and eventually viral DNA entry into the host nucleus. In Human adenovirus B serotype 7 (HAdV-7), this protein is Hexon-interlacing protein.